A 355-amino-acid polypeptide reads, in one-letter code: MTADTPSWPEVLSALLARRDLTEAEAAWAMHQIMSGEATDAQIAAFAVALRAKGESAEEVSGLSSVMLALAAPVPPIGEALDIVGSGGDRAHTVNISTMAAIVAAATGVVVAKHGNRAASSACGSADLLEALGVAIDLDGAGVARCIERAGIGFCFAPVFHPSLRYAAVARREIGIPTVFNFLGPLTNPARPTASAVGVADPRMAPVVAGVLARRGMRALVFRGDDGLDELTVTTTSTVWVVRDGSVQEVAFDPRAVGIEPADTAALRGADARHNAAVARAVLSGERGPIRDAVLLNAAAGLTAFDTPRPDQLVDQISAAMTRCAAAIDTGKAAQLLDAWVEASQAARGVDADRS.

Residues glycine 85, 88-89 (GD), threonine 93, 95-98 (NIST), 113-121 (KHGNRAASS), and serine 125 each bind 5-phospho-alpha-D-ribose 1-diphosphate. An anthranilate-binding site is contributed by glycine 85. Serine 97 is a binding site for Mg(2+). Asparagine 116 lines the anthranilate pocket. Anthranilate is bound at residue arginine 171. 2 residues coordinate Mg(2+): aspartate 229 and glutamate 230.

The protein belongs to the anthranilate phosphoribosyltransferase family. In terms of assembly, homodimer. It depends on Mg(2+) as a cofactor.

The catalysed reaction is N-(5-phospho-beta-D-ribosyl)anthranilate + diphosphate = 5-phospho-alpha-D-ribose 1-diphosphate + anthranilate. Its pathway is amino-acid biosynthesis; L-tryptophan biosynthesis; L-tryptophan from chorismate: step 2/5. In terms of biological role, catalyzes the transfer of the phosphoribosyl group of 5-phosphorylribose-1-pyrophosphate (PRPP) to anthranilate to yield N-(5'-phosphoribosyl)-anthranilate (PRA). This Acidothermus cellulolyticus (strain ATCC 43068 / DSM 8971 / 11B) protein is Anthranilate phosphoribosyltransferase.